We begin with the raw amino-acid sequence, 172 residues long: RNA silencing suppressor p19 (172 aa).

Residues 153–172 (EGNVSGGSPEGIEAFEKESE) form a disordered region.

This sequence belongs to the tombusvirus protein p19 family. As to quaternary structure, homodimer.

Functionally, viral suppressor of RNA silencing which binds specifically to silencing RNAs (siRNAs). Acts as a molecular caliper to specifically select siRNAs based on the length of the duplex region of the RNA. The sequence is that of RNA silencing suppressor p19 from Pelargonium zonale (PeNSV).